Here is a 111-residue protein sequence, read N- to C-terminus: MFGKAGLGGLMKQAQQMQENMKKAQAKLAETEIEGEAGNGLVKITMTCAHEVRKIDISPDLIQEAADDKEMLEDLILAALKSARDKAEETANKTMGAFAQGLPPGVGDFFR.

The protein belongs to the YbaB/EbfC family. As to quaternary structure, homodimer.

It is found in the cytoplasm. The protein resides in the nucleoid. In terms of biological role, binds to DNA and alters its conformation. May be involved in regulation of gene expression, nucleoid organization and DNA protection. The chain is Nucleoid-associated protein NMCC_1355 from Neisseria meningitidis serogroup C (strain 053442).